Here is a 215-residue protein sequence, read N- to C-terminus: Protein GrpE (215 aa).

Over residues 1 to 28 (MKHTSDTPSNSDMPSDSQATQPNASATG) the composition is skewed to polar residues. The tract at residues 1-52 (MKHTSDTPSNSDMPSDSQATQPNASATGQAAHAYSSQAQRASADAQAVAGDE) is disordered. Over residues 29 to 52 (QAAHAYSSQAQRASADAQAVAGDE) the composition is skewed to low complexity.

It belongs to the GrpE family. Homodimer.

The protein resides in the cytoplasm. Functionally, participates actively in the response to hyperosmotic and heat shock by preventing the aggregation of stress-denatured proteins, in association with DnaK and GrpE. It is the nucleotide exchange factor for DnaK and may function as a thermosensor. Unfolded proteins bind initially to DnaJ; upon interaction with the DnaJ-bound protein, DnaK hydrolyzes its bound ATP, resulting in the formation of a stable complex. GrpE releases ADP from DnaK; ATP binding to DnaK triggers the release of the substrate protein, thus completing the reaction cycle. Several rounds of ATP-dependent interactions between DnaJ, DnaK and GrpE are required for fully efficient folding. This chain is Protein GrpE, found in Ralstonia pickettii (strain 12J).